Reading from the N-terminus, the 64-residue chain is MRLHHLLLALLFLVLSAWSGFTQGVGNPVSCVRNKGICVPIRCPGSMKQIGTCVGRAVKCCRKK.

The first 26 residues, 1-26 (MRLHHLLLALLFLVLSAWSGFTQGVG), serve as a signal peptide directing secretion. 3 cysteine pairs are disulfide-bonded: Cys-31–Cys-60, Cys-38–Cys-53, and Cys-43–Cys-61.

Belongs to the beta-defensin family. LAP/TAP subfamily. Tracheal epithelium.

It localises to the secreted. In terms of biological role, has antibacterial activity in vitro against Escherichia coli, Staphylococcus aureus, Klebsiella pneumonia, and Pseudomonas aeruginosa. In addition, the peptide is active against Candida albicans, indicating a broad spectrum of activity. The sequence is that of Tracheal antimicrobial peptide from Bos taurus (Bovine).